The chain runs to 459 residues: Bifunctional protein GlmU (459 aa).

Positions 1 to 230 (MSNRFAVILA…FDETLGVNDR (230 aa)) are pyrophosphorylase. UDP-N-acetyl-alpha-D-glucosamine is bound by residues 9–12 (LAAG), lysine 23, glutamine 73, and 78–79 (GT). Aspartate 103 provides a ligand contact to Mg(2+). Residues glycine 140, glutamate 155, asparagine 170, and asparagine 228 each contribute to the UDP-N-acetyl-alpha-D-glucosamine site. Asparagine 228 serves as a coordination point for Mg(2+). Residues 231–251 (VALSQAEVIMKNRINHKNMVN) are linker. The segment at 252 to 459 (GVTIIDPSNT…VDQLLNKKKS (208 aa)) is N-acetyltransferase. Positions 333 and 351 each coordinate UDP-N-acetyl-alpha-D-glucosamine. Histidine 363 serves as the catalytic Proton acceptor. Tyrosine 366 and asparagine 377 together coordinate UDP-N-acetyl-alpha-D-glucosamine. Acetyl-CoA contacts are provided by residues 386–387 (NY), alanine 423, and arginine 440.

It in the N-terminal section; belongs to the N-acetylglucosamine-1-phosphate uridyltransferase family. In the C-terminal section; belongs to the transferase hexapeptide repeat family. As to quaternary structure, homotrimer. The cofactor is Mg(2+).

Its subcellular location is the cytoplasm. It carries out the reaction alpha-D-glucosamine 1-phosphate + acetyl-CoA = N-acetyl-alpha-D-glucosamine 1-phosphate + CoA + H(+). It catalyses the reaction N-acetyl-alpha-D-glucosamine 1-phosphate + UTP + H(+) = UDP-N-acetyl-alpha-D-glucosamine + diphosphate. The protein operates within nucleotide-sugar biosynthesis; UDP-N-acetyl-alpha-D-glucosamine biosynthesis; N-acetyl-alpha-D-glucosamine 1-phosphate from alpha-D-glucosamine 6-phosphate (route II): step 2/2. It participates in nucleotide-sugar biosynthesis; UDP-N-acetyl-alpha-D-glucosamine biosynthesis; UDP-N-acetyl-alpha-D-glucosamine from N-acetyl-alpha-D-glucosamine 1-phosphate: step 1/1. It functions in the pathway bacterial outer membrane biogenesis; LPS lipid A biosynthesis. Catalyzes the last two sequential reactions in the de novo biosynthetic pathway for UDP-N-acetylglucosamine (UDP-GlcNAc). The C-terminal domain catalyzes the transfer of acetyl group from acetyl coenzyme A to glucosamine-1-phosphate (GlcN-1-P) to produce N-acetylglucosamine-1-phosphate (GlcNAc-1-P), which is converted into UDP-GlcNAc by the transfer of uridine 5-monophosphate (from uridine 5-triphosphate), a reaction catalyzed by the N-terminal domain. In Bacillus cytotoxicus (strain DSM 22905 / CIP 110041 / 391-98 / NVH 391-98), this protein is Bifunctional protein GlmU.